The chain runs to 214 residues: Threonylcarbamoyl-AMP synthase (214 aa).

Residues threonine 9–arginine 214 enclose the YrdC-like domain.

Belongs to the SUA5 family. TsaC subfamily.

It is found in the cytoplasm. The enzyme catalyses L-threonine + hydrogencarbonate + ATP = L-threonylcarbamoyladenylate + diphosphate + H2O. In terms of biological role, required for the formation of a threonylcarbamoyl group on adenosine at position 37 (t(6)A37) in tRNAs that read codons beginning with adenine. Catalyzes the conversion of L-threonine, HCO(3)(-)/CO(2) and ATP to give threonylcarbamoyl-AMP (TC-AMP) as the acyladenylate intermediate, with the release of diphosphate. The chain is Threonylcarbamoyl-AMP synthase from Psychrobacter arcticus (strain DSM 17307 / VKM B-2377 / 273-4).